The primary structure comprises 259 residues: Tryptophan synthase alpha chain (259 aa).

Residues glutamate 48 and aspartate 59 each act as proton acceptor in the active site.

It belongs to the TrpA family. Tetramer of two alpha and two beta chains.

The enzyme catalyses (1S,2R)-1-C-(indol-3-yl)glycerol 3-phosphate + L-serine = D-glyceraldehyde 3-phosphate + L-tryptophan + H2O. It functions in the pathway amino-acid biosynthesis; L-tryptophan biosynthesis; L-tryptophan from chorismate: step 5/5. In terms of biological role, the alpha subunit is responsible for the aldol cleavage of indoleglycerol phosphate to indole and glyceraldehyde 3-phosphate. In Syntrophomonas wolfei subsp. wolfei (strain DSM 2245B / Goettingen), this protein is Tryptophan synthase alpha chain.